A 558-amino-acid chain; its full sequence is Adenine deaminase (558 aa).

This sequence belongs to the metallo-dependent hydrolases superfamily. Adenine deaminase family. It depends on Mn(2+) as a cofactor.

It catalyses the reaction adenine + H2O + H(+) = hypoxanthine + NH4(+). The chain is Adenine deaminase from Methanoregula boonei (strain DSM 21154 / JCM 14090 / 6A8).